The chain runs to 256 residues: Signal peptidase I (256 aa).

Catalysis depends on residues Ser-32 and Lys-75.

This sequence belongs to the peptidase S26 family.

The enzyme catalyses Cleavage of hydrophobic, N-terminal signal or leader sequences from secreted and periplasmic proteins.. In Aquifex aeolicus (strain VF5), this protein is Signal peptidase I (lepB).